Reading from the N-terminus, the 245-residue chain is Orotidine 5'-phosphate decarboxylase (245 aa).

Residues D22, K44, 71–80, T131, R192, Q201, G221, and R222 each bind substrate; that span reads DLKFHDIPNT. K73 (proton donor) is an active-site residue.

The protein belongs to the OMP decarboxylase family. Type 1 subfamily. In terms of assembly, homodimer.

The catalysed reaction is orotidine 5'-phosphate + H(+) = UMP + CO2. Its pathway is pyrimidine metabolism; UMP biosynthesis via de novo pathway; UMP from orotate: step 2/2. Its function is as follows. Catalyzes the decarboxylation of orotidine 5'-monophosphate (OMP) to uridine 5'-monophosphate (UMP). This chain is Orotidine 5'-phosphate decarboxylase, found in Shigella boydii serotype 18 (strain CDC 3083-94 / BS512).